A 159-amino-acid chain; its full sequence is MRIGHGFDVHAFGGEGPIIIGGVRIPYEKGLLAHSDGDVALHALTDALLGAAALGDIGKLFPDTDPAFKGADSRELLREAWRRIQAKGYILGNVDVTIIAQAPKMLPHIPQMRVFIAEDLGCHMDDVNVKATTTEKLGFTGRGEGITCEAVALLMKAAK.

Residues Asp-8 and His-10 each coordinate a divalent metal cation. Residues 8–10 (DVH) and 34–35 (HS) each bind 4-CDP-2-C-methyl-D-erythritol 2-phosphate. Residue His-42 coordinates a divalent metal cation. 4-CDP-2-C-methyl-D-erythritol 2-phosphate-binding positions include 56–58 (DIG), 61–65 (FPDTD), 100–106 (AQAPKML), 132–135 (TTTE), Phe-139, and Arg-142.

This sequence belongs to the IspF family. Homotrimer. The cofactor is a divalent metal cation.

It carries out the reaction 4-CDP-2-C-methyl-D-erythritol 2-phosphate = 2-C-methyl-D-erythritol 2,4-cyclic diphosphate + CMP. The protein operates within isoprenoid biosynthesis; isopentenyl diphosphate biosynthesis via DXP pathway; isopentenyl diphosphate from 1-deoxy-D-xylulose 5-phosphate: step 4/6. Functionally, involved in the biosynthesis of isopentenyl diphosphate (IPP) and dimethylallyl diphosphate (DMAPP), two major building blocks of isoprenoid compounds. Catalyzes the conversion of 4-diphosphocytidyl-2-C-methyl-D-erythritol 2-phosphate (CDP-ME2P) to 2-C-methyl-D-erythritol 2,4-cyclodiphosphate (ME-CPP) with a corresponding release of cytidine 5-monophosphate (CMP). The chain is 2-C-methyl-D-erythritol 2,4-cyclodiphosphate synthase from Salmonella arizonae (strain ATCC BAA-731 / CDC346-86 / RSK2980).